We begin with the raw amino-acid sequence, 320 residues long: o-succinylbenzoate synthase (320 aa).

The active-site Proton donor is the K133. Residues D161, E190, and D213 each contribute to the Mg(2+) site. The active-site Proton acceptor is K235.

Belongs to the mandelate racemase/muconate lactonizing enzyme family. MenC type 1 subfamily. It depends on a divalent metal cation as a cofactor.

The enzyme catalyses (1R,6R)-6-hydroxy-2-succinyl-cyclohexa-2,4-diene-1-carboxylate = 2-succinylbenzoate + H2O. It functions in the pathway quinol/quinone metabolism; 1,4-dihydroxy-2-naphthoate biosynthesis; 1,4-dihydroxy-2-naphthoate from chorismate: step 4/7. It participates in quinol/quinone metabolism; menaquinone biosynthesis. Its function is as follows. Converts 2-succinyl-6-hydroxy-2,4-cyclohexadiene-1-carboxylate (SHCHC) to 2-succinylbenzoate (OSB). The sequence is that of o-succinylbenzoate synthase from Salmonella heidelberg (strain SL476).